The primary structure comprises 518 residues: Protein CYCLOPS (518 aa).

Residues 401 to 451 (DKKRKSLERYGSITSAVSDDKGDTTKKRRVERSRKMAEAKERNSTPSVPSD) form a disordered region. 2 consecutive short sequence motifs (nuclear localization signal) follow at residues 402–405 (KKRK) and 426–429 (KKRR). Positions 433–443 (SRKMAEAKERN) are enriched in basic and acidic residues. Residues 452 to 518 (MQAVLKRCEN…ERILSETEKM (67 aa)) are a coiled coil.

This sequence belongs to the CYCLOPS family. As to quaternary structure, forms homodimers. Interacts with CCAMK. In terms of processing, phosphorylated at the N-terminus by CCAMK. As to expression, expressed in roots.

It localises to the nucleus. Its function is as follows. Involved in symbiotic signaling. Required for root infection by symbiotic rhizobia, infection thread (IT) formation, and nodule development. Probably not involved in nodule organogenesis. Involved in arbuscular mycorrhizal (AM) symbiosis. Required for fungal infection of the outer cortical cell layers, and for arbuscule development during the AM symbiosis, by binding, as a complex comprising CCaMK, CYCLOPS, and DELLA, to RAM1 promoter cis element thus promoting its expression. Acts downstream of CCAMK. Binds to the promoter of ERN1 and strongly transactivates ERN1, a transcriptional regulator required for nodulation. This Lotus japonicus (Lotus corniculatus var. japonicus) protein is Protein CYCLOPS.